Here is a 338-residue protein sequence, read N- to C-terminus: Lipoate-protein ligase A (338 aa).

In terms of domain architecture, BPL/LPL catalytic spans 29-216; the sequence is PATQRVLFLW…AFFAYYGERV (188 aa). ATP is bound by residues R71, 76–79, and K134; that span reads GAVF. K134 serves as a coordination point for (R)-lipoate.

It belongs to the LplA family. As to quaternary structure, monomer.

The protein resides in the cytoplasm. It catalyses the reaction L-lysyl-[lipoyl-carrier protein] + (R)-lipoate + ATP = N(6)-[(R)-lipoyl]-L-lysyl-[lipoyl-carrier protein] + AMP + diphosphate + H(+). It functions in the pathway protein modification; protein lipoylation via exogenous pathway; protein N(6)-(lipoyl)lysine from lipoate: step 1/2. It participates in protein modification; protein lipoylation via exogenous pathway; protein N(6)-(lipoyl)lysine from lipoate: step 2/2. In terms of biological role, catalyzes both the ATP-dependent activation of exogenously supplied lipoate to lipoyl-AMP and the transfer of the activated lipoyl onto the lipoyl domains of lipoate-dependent enzymes. In Cronobacter sakazakii (strain ATCC BAA-894) (Enterobacter sakazakii), this protein is Lipoate-protein ligase A.